The following is a 131-amino-acid chain: Heterochromatin silencing protein rss1 (131 aa).

As to quaternary structure, monomer.

The protein resides in the cytoplasm. The protein localises to the nucleus. Required for heterochromatin silencing within pericentromeric repeats and at telomers. Facilitates the recruitment of Clr6 histone deacetylase (HDAC) by interacting with histones. Also interacts with Rad25, which mediates heterochromatin silencing in DNA repeats by recruiting the RITS complex. Together with Rad25, forms a regulatory hub that defines heterochromatin silencing within tandem repeats via linking RNAi and HDAC. This is Heterochromatin silencing protein rss1 (rss1) from Schizosaccharomyces pombe (strain 972 / ATCC 24843) (Fission yeast).